The primary structure comprises 579 residues: Alpha-glucosidase (579 aa).

Catalysis depends on aspartate 212, which acts as the Nucleophile. The Proton donor role is filled by glutamate 269.

This sequence belongs to the glycosyl hydrolase 13 family.

The enzyme catalyses Hydrolysis of terminal, non-reducing (1-&gt;4)-linked alpha-D-glucose residues with release of alpha-D-glucose.. This chain is Alpha-glucosidase (mal1), found in Schizosaccharomyces pombe (strain 972 / ATCC 24843) (Fission yeast).